The sequence spans 426 residues: Probable imidazolonepropionase (426 aa).

The 4-imidazolone-5-propanoate site is built by Y159 and H192. Y159 serves as a coordination point for N-formimidoyl-L-glutamate. Residue H260 participates in Fe(3+) binding. H260 is a binding site for Zn(2+). E263 is a 4-imidazolone-5-propanoate binding site. Residue D334 coordinates Fe(3+). D334 is a Zn(2+) binding site. An N-formimidoyl-L-glutamate-binding site is contributed by N336.

This sequence belongs to the metallo-dependent hydrolases superfamily. HutI family. Zn(2+) is required as a cofactor. The cofactor is Fe(3+).

It catalyses the reaction 4-imidazolone-5-propanoate + H2O = N-formimidoyl-L-glutamate. Its pathway is amino-acid degradation; L-histidine degradation into L-glutamate; N-formimidoyl-L-glutamate from L-histidine: step 3/3. The protein is Probable imidazolonepropionase (AMDHD1) of Homo sapiens (Human).